The following is a 254-amino-acid chain: MWQLLLPTALLLLVSAGMRAEDLPKAVVFLEPQWYRVLEKDSVTLKCQGAYSPEDNSTRWFHNESLISSQTSSYFIAAARVNNSGEYRCQTSLSTLSDPVQLEVHIGWLLLQAPRWVFKEEESIHLRCHSWKNTLLHKVTYLQNGKGRKYFHQNSDFYIPKATLKDSGSYFCRGLIGSKNVSSETVNITITQDLAVSSISSFFPPGYQVSFCLVMVLLFAVDTGLYFSVKKSVPSSTRDWEDHKFKWSKDPQDK.

Residues 1-20 (MWQLLLPTALLLLVSAGMRA) form the signal peptide. Topologically, residues 21-206 (EDLPKAVVFL…SSISSFFPPG (186 aa)) are extracellular. Ig-like C2-type domains lie at 24 to 105 (PKAV…LEVH) and 107 to 189 (GWLL…VNIT). 2 disulfides stabilise this stretch: C47-C89 and C128-C172. N187 is a glycosylation site (N-linked (GlcNAc...) asparagine). Residues 207–229 (YQVSFCLVMVLLFAVDTGLYFSV) traverse the membrane as a helical segment. Over 230-254 (KKSVPSSTRDWEDHKFKWSKDPQDK) the chain is Cytoplasmic.

As to quaternary structure, forms a heterooligomeric complex with ITAM-containing signaling subunits, either a homodimer of CD247, a homodimer of FCER1G or a heterodimer of CD247 and FCER1G, to form a functional receptor complex. Interacts (via transmembrane domain) with signaling subunits; this interaction is a prerequisite for receptor complex expression on the cell surface and intracellular signal transduction. Binds the Fc region of antigen-complexed IgG with a preference for IgG1 and IgG3 isotypes. Interacts with CD2; this interaction is involved in NK cell activation and cytotoxicity. Interacts with S100A4; this interaction inhibits PKC-dependent phosphorylation of FCGR3A. Glycosylated. Glycosylation plays an inhibitory role in the interaction with IgG1 and IgG2. Post-translationally, undergoes rapid ectodomain shedding upon NK cell stimulation. The soluble form is produced by a proteolytic cleavage mediated by ADAM17. Repeated stimulation causes receptor shedding, a mechanism that allows for increased NK cell motility and detachment from opsonized target cells while avoiding activation-induced NK cell apoptosis. Lymphocytes and monocytes.

The protein localises to the cell membrane. It is found in the secreted. Receptor for the invariable Fc fragment of immunoglobulin gamma (IgG). Optimally activated upon binding of clustered antigen-IgG complexes displayed on cell surfaces, triggers lysis of antibody-coated cells, a process known as antibody-dependent cellular cytotoxicity (ADCC). Does not bind free monomeric IgG, thus avoiding inappropriate effector cell activation in the absence of antigenic trigger. Mediates IgG effector functions on natural killer (NK) cells. Binds antigen-IgG complexes generated upon infection and triggers NK cell-dependent cytokine production and degranulation to limit viral load and propagation. Involved in the generation of memory-like adaptive NK cells capable to produce high amounts of IFNG and to efficiently eliminate virus-infected cells via ADCC. Regulates NK cell survival and proliferation, in particular by preventing NK cell progenitor apoptosis. Fc-binding subunit that associates with CD247 and/or FCER1G adapters to form functional signaling complexes. Following the engagement of antigen-IgG complexes, triggers phosphorylation of immunoreceptor tyrosine-based activation motif (ITAM)-containing adapters with subsequent activation of phosphatidylinositol 3-kinase signaling and sustained elevation of intracellular calcium that ultimately drive NK cell activation. The ITAM-dependent signaling coupled to receptor phosphorylation by PKC mediates robust intracellular calcium flux that leads to production of pro-inflammatory cytokines, whereas in the absence of receptor phosphorylation it mainly activates phosphatidylinositol 3-kinase signaling leading to cell degranulation. Costimulates NK cells and trigger lysis of target cells independently of IgG binding. Mediates the antitumor activities of therapeutic antibodies. Upon ligation on monocytes triggers TNFA-dependent ADCC of IgG-coated tumor cells. Mediates enhanced ADCC in response to afucosylated IgGs. This is Low affinity immunoglobulin gamma Fc region receptor III-A from Macaca mulatta (Rhesus macaque).